We begin with the raw amino-acid sequence, 321 residues long: Lipoyl synthase (321 aa).

7 residues coordinate [4Fe-4S] cluster: Cys68, Cys73, Cys79, Cys94, Cys98, Cys101, and Ser308. Positions 80–297 constitute a Radical SAM core domain; it reads FNHGTATFMI…KALADELGFT (218 aa).

The protein belongs to the radical SAM superfamily. Lipoyl synthase family. The cofactor is [4Fe-4S] cluster.

The protein localises to the cytoplasm. It carries out the reaction [[Fe-S] cluster scaffold protein carrying a second [4Fe-4S](2+) cluster] + N(6)-octanoyl-L-lysyl-[protein] + 2 oxidized [2Fe-2S]-[ferredoxin] + 2 S-adenosyl-L-methionine + 4 H(+) = [[Fe-S] cluster scaffold protein] + N(6)-[(R)-dihydrolipoyl]-L-lysyl-[protein] + 4 Fe(3+) + 2 hydrogen sulfide + 2 5'-deoxyadenosine + 2 L-methionine + 2 reduced [2Fe-2S]-[ferredoxin]. The protein operates within protein modification; protein lipoylation via endogenous pathway; protein N(6)-(lipoyl)lysine from octanoyl-[acyl-carrier-protein]: step 2/2. In terms of biological role, catalyzes the radical-mediated insertion of two sulfur atoms into the C-6 and C-8 positions of the octanoyl moiety bound to the lipoyl domains of lipoate-dependent enzymes, thereby converting the octanoylated domains into lipoylated derivatives. The protein is Lipoyl synthase of Shewanella oneidensis (strain ATCC 700550 / JCM 31522 / CIP 106686 / LMG 19005 / NCIMB 14063 / MR-1).